The following is a 445-amino-acid chain: Arginine biosynthesis bifunctional protein ArgJ, mitochondrial (445 aa).

Residues Thr189, Lys215, Thr226, Glu312, Asn440, and Ser445 each coordinate substrate. Residue Thr226 is the Nucleophile of the active site.

This sequence belongs to the ArgJ family. In terms of assembly, heterodimer of an alpha and a beta chain. The alpha and beta chains are autoproteolytically processed from a single precursor protein within the mitochondrion.

The protein resides in the mitochondrion matrix. It catalyses the reaction N(2)-acetyl-L-ornithine + L-glutamate = N-acetyl-L-glutamate + L-ornithine. The catalysed reaction is L-glutamate + acetyl-CoA = N-acetyl-L-glutamate + CoA + H(+). It participates in amino-acid biosynthesis; L-arginine biosynthesis; L-ornithine and N-acetyl-L-glutamate from L-glutamate and N(2)-acetyl-L-ornithine (cyclic): step 1/1. The protein operates within amino-acid biosynthesis; L-arginine biosynthesis; N(2)-acetyl-L-ornithine from L-glutamate: step 1/4. In terms of biological role, catalyzes two activities which are involved in the cyclic version of arginine biosynthesis: the synthesis of acetylglutamate from glutamate and acetyl-CoA, and of ornithine by transacetylation between acetylornithine and glutamate. The protein is Arginine biosynthesis bifunctional protein ArgJ, mitochondrial of Schizosaccharomyces pombe (strain 972 / ATCC 24843) (Fission yeast).